Reading from the N-terminus, the 157-residue chain is Xanthine-guanine phosphoribosyltransferase (157 aa).

Residues 42–43 and 93–101 contribute to the 5-phospho-alpha-D-ribose 1-diphosphate site; these read RG and DDLVDTGNT. Aspartate 94 contributes to the Mg(2+) binding site. Guanine is bound by residues aspartate 97 and isoleucine 140. Aspartate 97 and isoleucine 140 together coordinate xanthine. Residues 97-101 and 139-140 contribute to the GMP site; these read DTGNT and WI.

This sequence belongs to the purine/pyrimidine phosphoribosyltransferase family. XGPT subfamily. As to quaternary structure, homotetramer. Mg(2+) serves as cofactor.

Its subcellular location is the cell inner membrane. The enzyme catalyses GMP + diphosphate = guanine + 5-phospho-alpha-D-ribose 1-diphosphate. The catalysed reaction is XMP + diphosphate = xanthine + 5-phospho-alpha-D-ribose 1-diphosphate. It carries out the reaction IMP + diphosphate = hypoxanthine + 5-phospho-alpha-D-ribose 1-diphosphate. It participates in purine metabolism; GMP biosynthesis via salvage pathway; GMP from guanine: step 1/1. The protein operates within purine metabolism; XMP biosynthesis via salvage pathway; XMP from xanthine: step 1/1. Purine salvage pathway enzyme that catalyzes the transfer of the ribosyl-5-phosphate group from 5-phospho-alpha-D-ribose 1-diphosphate (PRPP) to the N9 position of the 6-oxopurines guanine and xanthine to form the corresponding ribonucleotides GMP (guanosine 5'-monophosphate) and XMP (xanthosine 5'-monophosphate), with the release of PPi. To a lesser extent, also acts on hypoxanthine. The polypeptide is Xanthine-guanine phosphoribosyltransferase (Actinobacillus pleuropneumoniae serotype 5b (strain L20)).